We begin with the raw amino-acid sequence, 89 residues long: Small ribosomal subunit protein uS15 (89 aa).

It belongs to the universal ribosomal protein uS15 family. As to quaternary structure, part of the 30S ribosomal subunit. Forms a bridge to the 50S subunit in the 70S ribosome, contacting the 23S rRNA.

One of the primary rRNA binding proteins, it binds directly to 16S rRNA where it helps nucleate assembly of the platform of the 30S subunit by binding and bridging several RNA helices of the 16S rRNA. In terms of biological role, forms an intersubunit bridge (bridge B4) with the 23S rRNA of the 50S subunit in the ribosome. The polypeptide is Small ribosomal subunit protein uS15 (Bifidobacterium animalis subsp. lactis (strain AD011)).